We begin with the raw amino-acid sequence, 84 residues long: Defensin-like protein 116 (84 aa).

The signal sequence occupies residues 1–24 (MAITKNMLVVLLLTIIFVTSSVHC). Intrachain disulfides connect Cys40–Cys80, Cys46–Cys71, Cys55–Cys78, and Cys59–Cys79.

Belongs to the DEFL family.

It is found in the secreted. This Arabidopsis thaliana (Mouse-ear cress) protein is Defensin-like protein 116.